A 1024-amino-acid chain; its full sequence is Multidrug resistance protein MdtC (1024 aa).

12 helical membrane-spanning segments follow: residues 12-32 (VATTLLTLAITLSGIIGFSLL), 333-353 (EVERSLVIAVALVILVVFIFL), 360-380 (LIPAVAVPVSLIGTFAAMYLC), 387-407 (LSLMALTIATGFVVDDAIVVL), 435-455 (VLSMSISLVAVFIPLLLMAGL), 469-489 (VAIGISLVISLTLTPMMCAWL), 528-548 (WVMVVLLSTIALNVWLYISIP), 853-873 (LWLIMAAIATVYIVLGILYES), 875-895 (VHPLTILSTLPSAGVGALLAL), 897-917 (LFDAPFSLIALIGIMLLIGIV), 953-973 (PIIMTTLAALFGALPLVLSSG), and 984-1004 (ITIVGGLVVSQLLTLYTTPVI).

This sequence belongs to the resistance-nodulation-cell division (RND) (TC 2.A.6) family. MdtC subfamily. In terms of assembly, part of a tripartite efflux system composed of MdtA, MdtB and MdtC. MdtC forms a heteromultimer with MdtB.

It is found in the cell inner membrane. In Yersinia pestis bv. Antiqua (strain Antiqua), this protein is Multidrug resistance protein MdtC.